A 309-amino-acid chain; its full sequence is UDP-N-acetylenolpyruvoylglucosamine reductase (309 aa).

Positions 25–188 (RVGGPADWLF…TSVTLQGNRE (164 aa)) constitute an FAD-binding PCMH-type domain. The active site involves R168. Residues 202–231 (AKRDATQPTKALTAGSTFRNPAGFSSTGQA) form a disordered region. The segment covering 207-231 (TQPTKALTAGSTFRNPAGFSSTGQA) has biased composition (polar residues). S217 serves as the catalytic Proton donor. E299 is an active-site residue.

The protein belongs to the MurB family. It depends on FAD as a cofactor.

The protein localises to the cytoplasm. The catalysed reaction is UDP-N-acetyl-alpha-D-muramate + NADP(+) = UDP-N-acetyl-3-O-(1-carboxyvinyl)-alpha-D-glucosamine + NADPH + H(+). It participates in cell wall biogenesis; peptidoglycan biosynthesis. Its function is as follows. Cell wall formation. The sequence is that of UDP-N-acetylenolpyruvoylglucosamine reductase from Jannaschia sp. (strain CCS1).